The chain runs to 352 residues: Isopentenyl-diphosphate delta-isomerase (352 aa).

Residue 6 to 7 (RK) coordinates substrate. Residues 63–65 (AMT), S93, and N122 contribute to the FMN site. Position 93–95 (93–95 (SQR)) interacts with substrate. Q160 is a binding site for substrate. Position 161 (E161) interacts with Mg(2+). FMN contacts are provided by residues K192, T221, 271 to 273 (GIR), and 292 to 293 (SQ).

It belongs to the IPP isomerase type 2 family. In terms of assembly, homooctamer. Dimer of tetramers. FMN is required as a cofactor. It depends on NADPH as a cofactor. Mg(2+) serves as cofactor.

It is found in the cytoplasm. The catalysed reaction is isopentenyl diphosphate = dimethylallyl diphosphate. Involved in the biosynthesis of isoprenoids. Catalyzes the 1,3-allylic rearrangement of the homoallylic substrate isopentenyl (IPP) to its allylic isomer, dimethylallyl diphosphate (DMAPP). The polypeptide is Isopentenyl-diphosphate delta-isomerase (Pyrobaculum arsenaticum (strain DSM 13514 / JCM 11321 / PZ6)).